Consider the following 498-residue polypeptide: Probable cytosol aminopeptidase (498 aa).

Mn(2+)-binding residues include K262 and D267. Residue K274 is part of the active site. Positions 285, 344, and 346 each coordinate Mn(2+). R348 is a catalytic residue.

It belongs to the peptidase M17 family. The cofactor is Mn(2+).

It localises to the cytoplasm. It catalyses the reaction Release of an N-terminal amino acid, Xaa-|-Yaa-, in which Xaa is preferably Leu, but may be other amino acids including Pro although not Arg or Lys, and Yaa may be Pro. Amino acid amides and methyl esters are also readily hydrolyzed, but rates on arylamides are exceedingly low.. The enzyme catalyses Release of an N-terminal amino acid, preferentially leucine, but not glutamic or aspartic acids.. Presumably involved in the processing and regular turnover of intracellular proteins. Catalyzes the removal of unsubstituted N-terminal amino acids from various peptides. The sequence is that of Probable cytosol aminopeptidase from Phytoplasma mali (strain AT).